A 209-amino-acid polypeptide reads, in one-letter code: Protease (209 aa).

Residues H55, D72, and C123 contribute to the active site.

Belongs to the peptidase C5 family. As to quaternary structure, interacts with protease cofactor pVI-C; this interaction is necessary for protease activation.

It is found in the virion. It localises to the host nucleus. The enzyme catalyses Cleaves proteins of the adenovirus and its host cell at two consensus sites: -Yaa-Xaa-Gly-Gly-|-Xaa- and -Yaa-Xaa-Gly-Xaa-|-Gly- (in which Yaa is Met, Ile or Leu, and Xaa is any amino acid).. Its activity is regulated as follows. Requires DNA and protease cofactor for maximal activation. Inside nascent virions, becomes partially activated by binding to the viral DNA, allowing it to cleave the cofactor that binds to the protease and fully activates it. Actin, like the viral protease cofactor, seems to act as a cofactor in the cleavage of cytokeratin 18 and of actin itself. Cleaves viral precursor proteins (pTP, pIIIa, pVI, pVII, pVIII, and pX) inside newly assembled particles giving rise to mature virions. Protease complexed to its cofactor slides along the viral DNA to specifically locate and cleave the viral precursors. Mature virions have a weakened organization compared to the unmature virions, thereby facilitating subsequent uncoating. Without maturation, the particle lacks infectivity and is unable to uncoat. Late in adenovirus infection, in the cytoplasm, may participate in the cytoskeleton destruction. Cleaves host cell cytoskeletal keratins K7 and K18. This chain is Protease, found in Human adenovirus D serotype 9 (HAdV-9).